A 447-amino-acid chain; its full sequence is MADDEGEEDPGINNMGNLLQVISSESEEEDEMELEDAKTADSESPNIINFDTSLPTSHAYLGVDMEEFHGRTLHDDDSCQQIPVLPHVQVMLIPGQTLPLHLSRPQEVSMVRGLIQRDRTFAVLAYSDGLQREAHFGTTAEIYAYREEHEFGIETVKVKAIGRQRFQVLETRTQADGIQVARVQILPERVLPCPMTSLQLDSQSRHLLFPTNKPVSGRSPQSKCQWLHKYRRRKFLGASLTSWPSWLYALYDADSLMERVKLQLHEWDENLRDDSLPANPIDFSYRVAACLPIDDALRIQLLQIGNAIQRLRCELDIMSKCTSLCCKHCPDTEITTKNEIFSLSLCGPMAAYVNPHGYVHETLTVYKAFNLSLVGRPSTENSWFPGFAWTIAQCRVCGSHMGWKFTAVRKDLSPQKFWGLTRSALQPRIPEPDEGEMGHDHSPILCL.

Composition is skewed to acidic residues over residues 1-10 and 25-34; these read MADDEGEEDP and ESEEEDEMEL. Residues 1 to 47 form a disordered region; sequence MADDEGEEDPGINNMGNLLQVISSESEEEDEMELEDAKTADSESPNI. The Lon N-terminal domain occupies 82–322; it reads IPVLPHVQVM…CELDIMSKCT (241 aa). One can recognise a CULT domain in the interval 321 to 429; that stretch reads CTSLCCKHCP…LTRSALQPRI (109 aa). Residues Cys326 and Cys329 each contribute to the Zn(2+) site. Residues Trp383 and Trp389 each coordinate (S)-thalidomide. Zn(2+) is bound by residues Cys394 and Cys397.

It belongs to the CRBN family. In terms of assembly, component of a DCX (DDB1-CUL4-X-box) protein ligase complex.

It is found in the cytoplasm. It localises to the nucleus. It participates in protein modification; protein ubiquitination. In terms of biological role, substrate recognition component of a DCX (DDB1-CUL4-X-box) E3 protein ligase complex that mediates the ubiquitination and subsequent proteasomal degradation of target proteins, such as MEIS2. Normal degradation of key regulatory proteins is required for normal limb outgrowth and expression of the fibroblast growth factor FGF8. Maintains presynaptic glutamate release and consequently cognitive functions, such as memory and learning, by negatively regulating large-conductance calcium-activated potassium (BK) channels in excitatory neurons. Likely to function by regulating the assembly and neuronal surface expression of BK channels via its interaction with KCNT1. May also be involved in regulating anxiety-like behaviors via a BK channel-independent mechanism. This chain is Protein cereblon (crbn), found in Xenopus tropicalis (Western clawed frog).